Consider the following 349-residue polypeptide: NADP-dependent alcohol dehydrogenase C 1 (349 aa).

The Zn(2+) site is built by Cys-41, His-63, Cys-94, Cys-97, Cys-100, Cys-108, and Cys-159. Residue Lys-210 forms an Isoglutamyl lysine isopeptide (Lys-Gln) (interchain with Q-Cter in protein Pup) linkage.

Belongs to the zinc-containing alcohol dehydrogenase family. The cofactor is Zn(2+).

The catalysed reaction is a primary alcohol + NADP(+) = an aldehyde + NADPH + H(+). Prefers aldehydes over alcohols. The protein is NADP-dependent alcohol dehydrogenase C 1 (adhc1) of Mycolicibacterium smegmatis (strain ATCC 700084 / mc(2)155) (Mycobacterium smegmatis).